The sequence spans 188 residues: Putative manganese efflux pump MntP (188 aa).

The next 6 membrane-spanning stretches (helical) occupy residues 2–22, 40–60, 66–86, 107–127, 133–153, and 167–187; these read LYIEVLLLAIGLSMDSLAVSV, IASVLGIFQAGMTVIGYTMGL, ICAFDHWIAFTLLLYLGGKMI, LCGLGIATSIDALAVGISLAI, LLQASTIGVVTFAISAFGVYF, and LIGGLILIGIGTKILIEHLFF.

It belongs to the MntP (TC 9.B.29) family.

The protein localises to the cell inner membrane. Its function is as follows. Probably functions as a manganese efflux pump. The polypeptide is Putative manganese efflux pump MntP (Parabacteroides distasonis (strain ATCC 8503 / DSM 20701 / CIP 104284 / JCM 5825 / NCTC 11152)).